The primary structure comprises 347 residues: MSEQTIRLTQYSHGAGCGCKISPKVLETILHSEQAKFVDPNLLVGNETRDDAAVYDLGNGTSVISTTDFFMPIVDNPFDFGRIAATNAISDIFAMGGKPIMAIAILGWPINTLAPEIAREVIEGGRFACQQAGIALAGGHSIDAPEPIFGLAVTGIVPTERVKRNSTAQPGCKLFLTKPLGIGVLTTAEKKSLLKPEHIGLATEVMCQMNLAGAAFANIDGVKAMTDVTGFGLLGHLSEVCQGAGVQAQIVYQEIPKLPGVEEYIAQGAVPGGTQRNFASYGHLMGEMPVEWRDLLCDPQTSGGLLLAVTPESETEVKATAAEFGITLTAIGELVTARGGRPMIEIR.

Cys-17 is a catalytic residue. Residues Lys-20 and 48–50 (TRD) each bind ATP. Asp-51 serves as a coordination point for Mg(2+). Residues Asp-68, Asp-91, and 139-141 (GHS) each bind ATP. Asp-91 contributes to the Mg(2+) binding site. A Mg(2+)-binding site is contributed by Asp-227.

It belongs to the selenophosphate synthase 1 family. Class I subfamily. As to quaternary structure, homodimer. The cofactor is Mg(2+).

The enzyme catalyses hydrogenselenide + ATP + H2O = selenophosphate + AMP + phosphate + 2 H(+). Functionally, synthesizes selenophosphate from selenide and ATP. The sequence is that of Selenide, water dikinase from Enterobacter sp. (strain 638).